Consider the following 110-residue polypeptide: Disintegrin jerdostatin (110 aa).

The signal sequence occupies residues 1 to 20; it reads MIQVLLVTICLAVFPYQVSS. The propeptide occupies 21–67; the sequence is KTLKSGSVNEYEVVNPGTVTGLPKGAVKQPEKKHEPMKGNTLQKLPL. The region spanning 27–110 is the Disintegrin domain; sequence SVNEYEVVNP…CECPSYPGNG (84 aa). 4 disulfides stabilise this stretch: cysteine 68–cysteine 77, cysteine 73–cysteine 96, cysteine 74–cysteine 101, and cysteine 86–cysteine 103. The short motif at 88–90 is the Cell attachment site; atypical (RTS) element; it reads RTS.

This sequence belongs to the disintegrin family. Short disintegrin subfamily. In terms of assembly, monomer. In terms of processing, two conformers are found, they may differ by their disulfide bond connectivities. Conformer 2 is 33 times less active than conformer 1. Conformer 2 may represent a non-native protein. The C-terminal dipeptide may be post-translationally removed, as seen in disintegrins that possess a KTS integrin-binding motif. As to expression, expressed by the venom gland.

Its subcellular location is the secreted. Its function is as follows. Recombinant protein inhibits the adhesion of alpha-1/beta-1-K562 (ITGA1/ITGB1) cells to collagen IV with an IC(50) of 80 nM. The protein is Disintegrin jerdostatin of Protobothrops jerdonii (Jerdon's pitviper).